Reading from the N-terminus, the 231-residue chain is Tol-Pal system protein TolQ (231 aa).

3 helical membrane-spanning segments follow: residues 20–40 (IVVQ…WIMI), 134–154 (FLAT…VWGI), and 176–196 (IAEA…AVIA).

This sequence belongs to the ExbB/TolQ family. As to quaternary structure, the Tol-Pal system is composed of five core proteins: the inner membrane proteins TolA, TolQ and TolR, the periplasmic protein TolB and the outer membrane protein Pal. They form a network linking the inner and outer membranes and the peptidoglycan layer.

It is found in the cell inner membrane. Functionally, part of the Tol-Pal system, which plays a role in outer membrane invagination during cell division and is important for maintaining outer membrane integrity. The polypeptide is Tol-Pal system protein TolQ (Pseudomonas aeruginosa (strain ATCC 15692 / DSM 22644 / CIP 104116 / JCM 14847 / LMG 12228 / 1C / PRS 101 / PAO1)).